The sequence spans 324 residues: Acetyl-coenzyme A carboxylase carboxyl transferase subunit alpha (324 aa).

Residues 37–291 (KLERRLDKLK…QNFILQEWLR (255 aa)) enclose the CoA carboxyltransferase C-terminal domain.

It belongs to the AccA family. Acetyl-CoA carboxylase is a heterohexamer composed of biotin carboxyl carrier protein (AccB), biotin carboxylase (AccC) and two subunits each of ACCase subunit alpha (AccA) and ACCase subunit beta (AccD).

It is found in the cytoplasm. The catalysed reaction is N(6)-carboxybiotinyl-L-lysyl-[protein] + acetyl-CoA = N(6)-biotinyl-L-lysyl-[protein] + malonyl-CoA. Its pathway is lipid metabolism; malonyl-CoA biosynthesis; malonyl-CoA from acetyl-CoA: step 1/1. Component of the acetyl coenzyme A carboxylase (ACC) complex. First, biotin carboxylase catalyzes the carboxylation of biotin on its carrier protein (BCCP) and then the CO(2) group is transferred by the carboxyltransferase to acetyl-CoA to form malonyl-CoA. The protein is Acetyl-coenzyme A carboxylase carboxyl transferase subunit alpha of Chlamydia caviae (strain ATCC VR-813 / DSM 19441 / 03DC25 / GPIC) (Chlamydophila caviae).